Consider the following 318-residue polypeptide: Transaldolase (318 aa).

K126 functions as the Schiff-base intermediate with substrate in the catalytic mechanism.

This sequence belongs to the transaldolase family. Type 1 subfamily. As to quaternary structure, homodimer.

It localises to the cytoplasm. It carries out the reaction D-sedoheptulose 7-phosphate + D-glyceraldehyde 3-phosphate = D-erythrose 4-phosphate + beta-D-fructose 6-phosphate. The protein operates within carbohydrate degradation; pentose phosphate pathway; D-glyceraldehyde 3-phosphate and beta-D-fructose 6-phosphate from D-ribose 5-phosphate and D-xylulose 5-phosphate (non-oxidative stage): step 2/3. Transaldolase is important for the balance of metabolites in the pentose-phosphate pathway. The chain is Transaldolase from Cupriavidus metallidurans (strain ATCC 43123 / DSM 2839 / NBRC 102507 / CH34) (Ralstonia metallidurans).